The sequence spans 877 residues: DNA polymerase I (877 aa).

The region spanning 177–270 (TPAQFIDLKA…LEDLVYSGPD (94 aa)) is the 5'-3' exonuclease domain. In terms of domain architecture, 3'-5' exonuclease spans 302–465 (DFTIVDQISQ…TEPILLEKLS (164 aa)).

This sequence belongs to the DNA polymerase type-A family. Single-chain monomer with multiple functions.

The catalysed reaction is DNA(n) + a 2'-deoxyribonucleoside 5'-triphosphate = DNA(n+1) + diphosphate. In addition to polymerase activity, this DNA polymerase exhibits 3'-5' and 5'-3' exonuclease activity. The protein is DNA polymerase I (polA) of Streptococcus pneumoniae serotype 4 (strain ATCC BAA-334 / TIGR4).